The chain runs to 521 residues: Importin subunit alpha-4 (521 aa).

The interval 1-29 (MAENPSLENHRIKSFKNKGRDVETMRRHR) is disordered. Ala-2 is modified (N-acetylalanine). In terms of domain architecture, IBB spans 2-58 (AENPSLENHRIKSFKNKGRDVETMRRHRNEVTVELRKNKRDEHLLKKRNVPQEESLE). Residues 18 to 29 (KGRDVETMRRHR) show a composition bias toward basic and acidic residues. Residues 43-52 (EHLLKKRNVP) carry the Nuclear localization signal motif. Phosphoserine is present on residues Ser-56 and Ser-60. An ARM 1; truncated repeat occupies 66–106 (FKAQNVTLEAILQNATSDNPVVQLSAVQAARKLLSSDRNPP). ARM repeat units lie at residues 107 to 149 (IDDL…TSAQ), 150 to 194 (TQAV…CRDY), 195 to 233 (VISLGVVKPLLSFISPSIPITFLRNVTWVIVNLCRNKDP), 234 to 278 (PPPM…EQIQ), 279 to 318 (MVIDSGVVPFLVPLLSHQEVKVQTAALRAVGNIVTGTDEQ), 319 to 360 (TQVV…NQQQ), 361 to 400 (VQAVIDAGLIPMIIHQLAKGDFGTQKEAAWAISNLTISGR), and 401 to 443 (KDQV…IMAG). The segment at 137 to 229 (WALTNIASGT…VTWVIVNLCR (93 aa)) is NLS binding site (major). Residues 306 to 394 (RAVGNIVTGT…QKEAAWAISN (89 aa)) are NLS binding site (minor). One copy of the ARM 10; atypical repeat lies at 447–485 (STIAEIIEECGGLEKIEVLQQHENEDIYKLAFEIIDQYF). Tyr-484 bears the Phosphotyrosine mark.

This sequence belongs to the importin alpha family. As to quaternary structure, forms a complex with importin subunit beta-1. Interacts with DDX21. Interacts with NCBP1, NCBP2/CBP20 and NCBP3. Interacts with RCC1. Interacts with ZC3H11A. (Microbial infection) Interacts with HIV-1 integrase; this interaction might play a role in nuclear import of HIV pre-integration complex. In terms of assembly, (Microbial infection) Interacts with influenza virus nucleoprotein; this interaction might play a role in nuclear import of viral genome. As to expression, ubiquitous. Highest levels in heart and skeletal muscle.

The protein localises to the cytoplasm. It is found in the nucleus. Functions in nuclear protein import as an adapter protein for nuclear receptor KPNB1. Binds specifically and directly to substrates containing either a simple or bipartite NLS motif. Docking of the importin/substrate complex to the nuclear pore complex (NPC) is mediated by KPNB1 through binding to nucleoporin FxFG repeats and the complex is subsequently translocated through the pore by an energy requiring, Ran-dependent mechanism. At the nucleoplasmic side of the NPC, Ran binds to importin-beta and the three components separate and importin-alpha and -beta are re-exported from the nucleus to the cytoplasm where GTP hydrolysis releases Ran from importin. The directionality of nuclear import is thought to be conferred by an asymmetric distribution of the GTP- and GDP-bound forms of Ran between the cytoplasm and nucleus. In vitro, mediates the nuclear import of human cytomegalovirus UL84 by recognizing a non-classical NLS. Recognizes NLSs of influenza A virus nucleoprotein probably through ARM repeats 7-9. This chain is Importin subunit alpha-4 (KPNA3), found in Homo sapiens (Human).